We begin with the raw amino-acid sequence, 93 residues long: Cobalt transport protein CbiN (93 aa).

2 consecutive transmembrane segments (helical) span residues 5–25 (LMLLAMVVALVILPFFINHGG) and 63–83 (LLFTLQGSLGAAVIFYILGYC).

It belongs to the CbiN family. Forms an energy-coupling factor (ECF) transporter complex composed of an ATP-binding protein (A component, CbiO), a transmembrane protein (T component, CbiQ) and 2 possible substrate-capture proteins (S components, CbiM and CbiN) of unknown stoichimetry.

Its subcellular location is the cell inner membrane. The protein operates within cofactor biosynthesis; adenosylcobalamin biosynthesis. Part of the energy-coupling factor (ECF) transporter complex CbiMNOQ involved in cobalt import. This is Cobalt transport protein CbiN from Salmonella gallinarum (strain 287/91 / NCTC 13346).